A 286-amino-acid chain; its full sequence is NAD kinase (286 aa).

The Proton acceptor role is filled by aspartate 74. NAD(+)-binding positions include 74-75 (DG), 148-149 (ND), aspartate 178, alanine 186, 189-194 (TAYNLS), and glutamine 244.

Belongs to the NAD kinase family. A divalent metal cation serves as cofactor.

It is found in the cytoplasm. It carries out the reaction NAD(+) + ATP = ADP + NADP(+) + H(+). In terms of biological role, involved in the regulation of the intracellular balance of NAD and NADP, and is a key enzyme in the biosynthesis of NADP. Catalyzes specifically the phosphorylation on 2'-hydroxyl of the adenosine moiety of NAD to yield NADP. In Campylobacter jejuni subsp. jejuni serotype O:6 (strain 81116 / NCTC 11828), this protein is NAD kinase.